The sequence spans 289 residues: Probable ABC transporter permease protein BRA0749/BS1330_II0742 (289 aa).

Transmembrane regions (helical) follow at residues 9–29 (FLIL…VVHL), 70–90 (VWTV…AIIL), 99–119 (VARV…AIVW), 144–166 (IQWL…LVTV), 213–233 (IAIV…WVMT), and 260–280 (EASA…VIYI). An ABC transmembrane type-1 domain is found at 65–279 (LWRTAVWTVA…AILLVFTVIY (215 aa)).

Belongs to the binding-protein-dependent transport system permease family. In terms of assembly, the complex is composed of two ATP-binding proteins (BRA0745), two transmembrane proteins (BRA0749) and a solute-binding protein (BRA0748).

The protein localises to the cell inner membrane. Probably part of an ABC transporter complex. Probably responsible for the translocation of the substrate across the membrane. The sequence is that of Probable ABC transporter permease protein BRA0749/BS1330_II0742 from Brucella suis biovar 1 (strain 1330).